Consider the following 570-residue polypeptide: Sulfite reductase [NADPH] hemoprotein beta-component (570 aa).

Residues Cys434, Cys440, Cys479, and Cys483 each coordinate [4Fe-4S] cluster. A siroheme-binding site is contributed by Cys483.

It belongs to the nitrite and sulfite reductase 4Fe-4S domain family. As to quaternary structure, alpha(8)-beta(8). The alpha component is a flavoprotein, the beta component is a hemoprotein. Siroheme serves as cofactor. Requires [4Fe-4S] cluster as cofactor.

The catalysed reaction is hydrogen sulfide + 3 NADP(+) + 3 H2O = sulfite + 3 NADPH + 4 H(+). Its pathway is sulfur metabolism; hydrogen sulfide biosynthesis; hydrogen sulfide from sulfite (NADPH route): step 1/1. In terms of biological role, component of the sulfite reductase complex that catalyzes the 6-electron reduction of sulfite to sulfide. This is one of several activities required for the biosynthesis of L-cysteine from sulfate. The protein is Sulfite reductase [NADPH] hemoprotein beta-component of Salmonella heidelberg (strain SL476).